The sequence spans 240 residues: Small ribosomal subunit protein uS2 (240 aa).

This sequence belongs to the universal ribosomal protein uS2 family.

In Pasteurella multocida (strain Pm70), this protein is Small ribosomal subunit protein uS2 (rpsB).